The sequence spans 255 residues: Hydroxyacylglutathione hydrolase (255 aa).

His55, His57, Asp59, His60, His112, Asp129, and His167 together coordinate Zn(2+).

It belongs to the metallo-beta-lactamase superfamily. Glyoxalase II family. In terms of assembly, monomer. Zn(2+) is required as a cofactor.

The enzyme catalyses an S-(2-hydroxyacyl)glutathione + H2O = a 2-hydroxy carboxylate + glutathione + H(+). It participates in secondary metabolite metabolism; methylglyoxal degradation; (R)-lactate from methylglyoxal: step 2/2. Thiolesterase that catalyzes the hydrolysis of S-D-lactoyl-glutathione to form glutathione and D-lactic acid. In Halorhodospira halophila (strain DSM 244 / SL1) (Ectothiorhodospira halophila (strain DSM 244 / SL1)), this protein is Hydroxyacylglutathione hydrolase.